Reading from the N-terminus, the 2628-residue chain is Hemagglutinin A (2628 aa).

A signal peptide spans 1–24 (MRKLNSLFSLAVLLSLLCWGQTAA). Peptidase C25-like regions lie at residues 25–539 (AQGG…TPPP), 540–995 (GGTS…TPPP), 996–1451 (GGTS…TPPP), 1452–1907 (GGTS…TPPP), and 2074–2628 (IDAD…LAVK). Disordered stretches follow at residues 493–512 (WDAP…LSES), 520–546 (SWKT…SFAG), 944–1002 (KWDA…SFAG), 1400–1458 (KWDA…SFAG), 1856–1881 (KWDA…SESF), 1890–1909 (KTID…PPGG), and 2336–2358 (SSWK…PPGG). The span at 496–508 (PNGTPNPNPGTTT) shows a compositional bias: low complexity.

It belongs to the peptidase C25 family.

In terms of biological role, agglutinates erythrocytes. This Porphyromonas gingivalis (Bacteroides gingivalis) protein is Hemagglutinin A (hagA).